A 486-amino-acid chain; its full sequence is Sensor protein PhoQ (486 aa).

Residues 1 to 16 lie on the Cytoplasmic side of the membrane; sequence MKKLLRLFFPLSLRVR. Residues 17 to 37 form a helical membrane-spanning segment; the sequence is FLLATAAVVLVLSLAYGMVAL. Topologically, residues 38–194 are periplasmic; the sequence is IGYSVSFDKT…LKSSYMVWSW (157 aa). A divalent metal cation-binding residues include D151 and D152. The chain crosses the membrane as a helical span at residues 195–215; the sequence is FIYVLSANLLLVIPLLWVAAW. The region spanning 215-266 is the HAMP domain; that stretch reads WWSLRPIEALAKEVRELEEHNRELLNPATTRELTSLVRNLNRLLKSERERYD. The Cytoplasmic portion of the chain corresponds to 216-486; it reads WSLRPIEALA…GRQHSAPKDE (271 aa). Positions 274–480 constitute a Histidine kinase domain; sequence DLTHSLKTPL…RMEVIFGRQH (207 aa). The residue at position 277 (H277) is a Phosphohistidine; by autocatalysis. N385 provides a ligand contact to Mg(2+). ATP-binding positions include 385–393, 415–420, and 434–446; these read NVLDNACKY, DDGPGI, and RVDT…GVGL. Q442 serves as a coordination point for Mg(2+).

In terms of assembly, homodimer; probably dimerizes via the cytoplasmic domain. Probably interacts with MgrB in the periplasm, altering its activity and that of downstream effector PhoP.

Its subcellular location is the cell inner membrane. The catalysed reaction is ATP + protein L-histidine = ADP + protein N-phospho-L-histidine.. Its activity is regulated as follows. Acetyl-CoA acts as a non-competitive inhibitor of the PhoQ autokinase activity. Feedback inhibited by MgrB, which seems to bind PhoQ, altering its activity and that of downstream effector PhoP. Its function is as follows. Member of the two-component regulatory system PhoP/PhoQ involved in adaptation to low Mg(2+) environments and the control of acid resistance genes. In low periplasmic Mg(2+), PhoQ functions as a membrane-associated protein kinase that undergoes autophosphorylation and subsequently transfers the phosphate to PhoP, resulting in the expression of PhoP-activated genes (PAG) and repression of PhoP-repressed genes (PRG). In high periplasmic Mg(2+), acts as a protein phosphatase that dephosphorylates phospho-PhoP, resulting in the repression of PAG and may lead to expression of some PRG. PhoP-regulated transcription is redox-sensitive, being activated when the periplasm becomes more reducing (deletion of dsbA/dsbB, or treatment with dithiothreitol). MgrB acts between DsbA/DsbB and PhoP/PhoQ in this pathway; the 2 periplasmic Cys residues of MgrB are required for its action on PhoQ, which then acts on PhoP. Mediates magnesium influx to the cytosol by activation of mgtA. Promotes expression of the two-component regulatory system rstA/rstB and transcription of the hemL, mgrB, nagA, slyB, vboR and yrbL genes. The chain is Sensor protein PhoQ (phoQ) from Escherichia coli (strain K12).